The primary structure comprises 739 residues: MAPWLQLCSVFFTVNACLNGSQLAVAAGGSGRARGADTCGWRGVGPASRNSGLYNITFKYDNCTTYLNPVGKHVIADAQNITISQYACHDQVAVTILWSPGALGIEFLKGFRVILEELKSEGRQCQQLILKDPKQLNSSFKRTGMESQPFLNMKFETDYFVKVVPFPSIKNESNYHPFFFRTRACDLLLQPDNLACKPFWKPRNLNISQHGSDMQVSFDHAPHNFGFRFFYLHYKLKHEGPFKRKTCKQEQTTETTSCLLQNVSPGDYIIELVDDTNTTRKVMHYALKPVHSPWAGPIRAVAITVPLVVISAFATLFTVMCRKKQQENIYSHLDEESSESSTYTAALPRERLRPRPKVFLCYSSKDGQNHMNVVQCFAYFLQDFCGCEVALDLWEDFSLCREGQREWVIQKIHESQFIIVVCSKGMKYFVDKKNYKHKGGGRGSGKGELFLVAVSAIAEKLRQAKQSSSAALSKFIAVYFDYSCEGDVPGILDLSTKYRLMDNLPQLCSHLHSRDHGLQEPGQHTRQGSRRNYFRSKSGRSLYVAICNMHQFIDEEPDWFEKQFVPFHPPPLRYREPVLEKFDSGLVLNDVMCKPGPESDFCLKVEAAVLGATGPADSQHESQHGGLDQDGEARPALDGSAALQPLLHTVKAGSPSDMPRDSGIYDSSVPSSELSLPLMEGLSTDQTETSSLTESVSSSSGLGEEEPPALPSKLLSSGSCKADLGCRSYTDELHAVAPL.

Residues Met1–Ala16 form the signal peptide. Topologically, residues Cys17–Arg299 are extracellular. N-linked (GlcNAc...) asparagine glycosylation is found at Asn19, Asn55, Asn62, Asn80, Asn137, Asn171, Asn206, and Asn277. The helical transmembrane segment at Ala300 to Met320 threads the bilayer. Residues Cys321–Leu739 lie on the Cytoplasmic side of the membrane. One can recognise an SEFIR domain in the interval Arg355–Ser509. Disordered regions lie at residues Gly614 to Pro635 and Val650 to Ser719. The span at Ser667–Leu702 shows a compositional bias: low complexity.

As to quaternary structure, interacts with MAP3K7. Self-associates. Interacts with FGFR1, FGFR2 and phosphorylated MAP2K1 or MAP2K2. Associates with a MAP2K1/2-MAPK1/3 complex. Expressed in umbilical vein endothelial cells and in several highly vascularized tissues such as kidney, colon, skeletal muscle, heart and small intestine. Highly expressed in ductal epithelial cells of salivary glands, seminal vesicles and the collecting tubules of the kidney. Isoform 1 is also highly expressed in both fetal and adult brain, pituitary, tonsils, spleen, adenoids, fetal kidney, liver, testes and ovary. Isoform 1 is also expressed at moderate levels in primary aortic endothelial cells and adrenal medulla, and at low levels in adrenal cortex. Isoform 4 is specifically and highly expressed in pituitary, fetal brain and umbilical vein endothelial cells.

The protein localises to the golgi apparatus membrane. The protein resides in the cell membrane. Its subcellular location is the cytoplasm. In terms of biological role, feedback inhibitor of fibroblast growth factor mediated Ras-MAPK signaling and ERK activation. Regulates the nuclear ERK signaling pathway by spatially blocking nuclear translocation of activated ERK without inhibiting cytoplasmic phosphorylation of ERK. Mediates JNK activation and may be involved in apoptosis. May inhibit FGF-induced FGFR1 tyrosine phosphorylation. Might have a role in the early stages of fate specification of GnRH-secreting neurons. Inhibits TGFB-induced epithelial-to-mesenchymal transition in lens epithelial cells. This Homo sapiens (Human) protein is Interleukin-17 receptor D (IL17RD).